Reading from the N-terminus, the 176-residue chain is Disulfide bond formation protein B (176 aa).

Residues 1–14 are Cytoplasmic-facing; it reads MMRSLNRCSKHRAA. A helical membrane pass occupies residues 15–31; the sequence is WLLLALTTFSLELVALY. At 32–49 the chain is on the periplasmic side; it reads FQHVMLLKPCVLCVYQRC. A disulfide bridge connects residues C41 and C44. Residues 50-65 form a helical membrane-spanning segment; the sequence is ALYGVVAAGLVGAIAP. Topologically, residues 66 to 71 are cytoplasmic; sequence ATPLRF. Residues 72–89 traverse the membrane as a helical segment; sequence SGLAIWLYSAWEGLQLAM. Residues 90 to 144 lie on the Periplasmic side of the membrane; it reads KHTDIQLHPSPFVTCDFFVSFPAWLPLDKWLPSVFSASGDCAVRQWHFLSLEMPQ. A disulfide bond links C104 and C130. The helical transmembrane segment at 145-163 threads the bilayer; it reads WMIVIFGAYLAVAVLILLA. At 164–176 the chain is on the cytoplasmic side; sequence QFFPPRKRDLFSR.

The protein belongs to the DsbB family.

The protein resides in the cell inner membrane. Required for disulfide bond formation in some periplasmic proteins. Acts by oxidizing the DsbA protein. The protein is Disulfide bond formation protein B of Sodalis glossinidius (strain morsitans).